We begin with the raw amino-acid sequence, 780 residues long: Ribonucleoside-diphosphate reductase large subunit (780 aa).

Substrate contacts are provided by residues Thr177, 192–193 (SC), Gly223, 393–397 (NLCAE), and 595–599 (PTVGS). Cysteines 193 and 409 form a disulfide. Catalysis depends on Asn393, which acts as the Proton acceptor. Cys395 functions as the Cysteine radical intermediate in the catalytic mechanism. Glu397 serves as the catalytic Proton acceptor.

This sequence belongs to the ribonucleoside diphosphate reductase large chain family. As to quaternary structure, heterotetramer composed of a homodimer of the large subunit (R1) and a homodimer of the small subunit (R2). Larger multisubunit protein complex are also active, composed of (R1)n(R2)n.

It catalyses the reaction a 2'-deoxyribonucleoside 5'-diphosphate + [thioredoxin]-disulfide + H2O = a ribonucleoside 5'-diphosphate + [thioredoxin]-dithiol. Ribonucleoside-diphosphate reductase holoenzyme provides the precursors necessary for viral DNA synthesis. Allows virus growth in non-dividing cells, as well as reactivation from latency in infected hosts. Catalyzes the biosynthesis of deoxyribonucleotides from the corresponding ribonucleotides. The polypeptide is Ribonucleoside-diphosphate reductase large subunit (Connochaetes taurinus (Blue wildebeest)).